The primary structure comprises 126 residues: Large ribosomal subunit protein bL12 (126 aa).

Belongs to the bacterial ribosomal protein bL12 family. As to quaternary structure, homodimer. Part of the ribosomal stalk of the 50S ribosomal subunit. Forms a multimeric L10(L12)X complex, where L10 forms an elongated spine to which 2 to 4 L12 dimers bind in a sequential fashion. Binds GTP-bound translation factors.

In terms of biological role, forms part of the ribosomal stalk which helps the ribosome interact with GTP-bound translation factors. Is thus essential for accurate translation. The polypeptide is Large ribosomal subunit protein bL12 (Geotalea daltonii (strain DSM 22248 / JCM 15807 / FRC-32) (Geobacter daltonii)).